The following is a 275-amino-acid chain: Putative ABC transporter permease protein ORF2 (275 aa).

The next 6 helical transmembrane spans lie at 11–31 (YFIF…FMLF), 74–94 (IAVS…AFAF), 108–128 (LIIA…YVLT), 136–156 (TVFA…IFIL), 185–205 (ILLP…GTYL), and 239–259 (IPAI…AYIF). An ABC transmembrane type-1 domain is found at 69–260 (LKNSVIAVSI…LPMLIAYIFG (192 aa)).

It belongs to the binding-protein-dependent transport system permease family. MalFG subfamily.

Its subcellular location is the cell membrane. The sequence is that of Putative ABC transporter permease protein ORF2 from Caldicellulosiruptor sp. (strain Rt8B.4).